The primary structure comprises 180 residues: MSRIGKLPIKIVDSVKVDIKDNIVTVEGKRGKLSQELKSSIKVRVEDSNIIVERSFDDKQTRAFHGLYRSLISNMVKGVSDGFSKSLTISGIGYRVEQQGTSLFFNLGYSTQFEYVIPEGINIRLDGNTKIAVEGIDKCRVGQVAAEIRGLRVPEPYKGKGIKYDNEVIRRKVGKSGVKK.

Belongs to the universal ribosomal protein uL6 family. Part of the 50S ribosomal subunit.

This protein binds to the 23S rRNA, and is important in its secondary structure. It is located near the subunit interface in the base of the L7/L12 stalk, and near the tRNA binding site of the peptidyltransferase center. The protein is Large ribosomal subunit protein uL6 of Borrelia turicatae (strain 91E135).